The chain runs to 113 residues: Hydrogenase maturation factor HypA (113 aa).

A Ni(2+)-binding site is contributed by His2. Residues Cys73, Cys76, Cys89, and Cys92 each contribute to the Zn(2+) site.

The protein belongs to the HypA/HybF family.

In terms of biological role, involved in the maturation of [NiFe] hydrogenases. Required for nickel insertion into the metal center of the hydrogenase. This is Hydrogenase maturation factor HypA from Acidithiobacillus ferrooxidans (strain ATCC 23270 / DSM 14882 / CIP 104768 / NCIMB 8455) (Ferrobacillus ferrooxidans (strain ATCC 23270)).